The following is a 44-amino-acid chain: Photosystem II reaction center protein K (44 aa).

A propeptide spanning residues 1–7 is cleaved from the precursor; that stretch reads MESLLLA. A helical membrane pass occupies residues 23-43; the sequence is FPVIPVFFLLLAFVWQAAVGF.

It belongs to the PsbK family. PSII is composed of 1 copy each of membrane proteins PsbA, PsbB, PsbC, PsbD, PsbE, PsbF, PsbH, PsbI, PsbJ, PsbK, PsbL, PsbM, PsbT, PsbX, PsbY, PsbZ, Psb30/Ycf12, at least 3 peripheral proteins of the oxygen-evolving complex and a large number of cofactors. It forms dimeric complexes.

It is found in the plastid. The protein resides in the chloroplast thylakoid membrane. Its function is as follows. One of the components of the core complex of photosystem II (PSII). PSII is a light-driven water:plastoquinone oxidoreductase that uses light energy to abstract electrons from H(2)O, generating O(2) and a proton gradient subsequently used for ATP formation. It consists of a core antenna complex that captures photons, and an electron transfer chain that converts photonic excitation into a charge separation. This chain is Photosystem II reaction center protein K, found in Thalassiosira pseudonana (Marine diatom).